The chain runs to 249 residues: Probable transcriptional regulatory protein HY04AAS1_0501 (249 aa).

It belongs to the TACO1 family.

The protein localises to the cytoplasm. This is Probable transcriptional regulatory protein HY04AAS1_0501 from Hydrogenobaculum sp. (strain Y04AAS1).